The sequence spans 351 residues: Thiamine-phosphate synthase (351 aa).

The segment at 1 to 127 is unknown; the sequence is MQNLAPASEG…SETAKALRYR (127 aa). The disordered stretch occupies residues 64 to 84; sequence RAARQTDQDPGTALSHPQERD. The segment at 128–351 is thiamine-phosphate synthase; that stretch reads VYILEQALTL…LRRLSQGEPS (224 aa). Residues 178–182 and N210 contribute to the 4-amino-2-methyl-5-(diphosphooxymethyl)pyrimidine site; that span reads QYRDK. Positions 211 and 230 each coordinate Mg(2+). Residue S249 participates in 4-amino-2-methyl-5-(diphosphooxymethyl)pyrimidine binding. 275–277 lines the 2-[(2R,5Z)-2-carboxy-4-methylthiazol-5(2H)-ylidene]ethyl phosphate pocket; the sequence is TPT. K278 contacts 4-amino-2-methyl-5-(diphosphooxymethyl)pyrimidine. G305 is a 2-[(2R,5Z)-2-carboxy-4-methylthiazol-5(2H)-ylidene]ethyl phosphate binding site.

It belongs to the thiamine-phosphate synthase family. Mg(2+) is required as a cofactor.

The catalysed reaction is 2-[(2R,5Z)-2-carboxy-4-methylthiazol-5(2H)-ylidene]ethyl phosphate + 4-amino-2-methyl-5-(diphosphooxymethyl)pyrimidine + 2 H(+) = thiamine phosphate + CO2 + diphosphate. It carries out the reaction 2-(2-carboxy-4-methylthiazol-5-yl)ethyl phosphate + 4-amino-2-methyl-5-(diphosphooxymethyl)pyrimidine + 2 H(+) = thiamine phosphate + CO2 + diphosphate. The enzyme catalyses 4-methyl-5-(2-phosphooxyethyl)-thiazole + 4-amino-2-methyl-5-(diphosphooxymethyl)pyrimidine + H(+) = thiamine phosphate + diphosphate. It functions in the pathway cofactor biosynthesis; thiamine diphosphate biosynthesis; thiamine phosphate from 4-amino-2-methyl-5-diphosphomethylpyrimidine and 4-methyl-5-(2-phosphoethyl)-thiazole: step 1/1. Functionally, condenses 4-methyl-5-(beta-hydroxyethyl)thiazole monophosphate (THZ-P) and 2-methyl-4-amino-5-hydroxymethyl pyrimidine pyrophosphate (HMP-PP) to form thiamine monophosphate (TMP). This chain is Thiamine-phosphate synthase, found in Thermosynechococcus vestitus (strain NIES-2133 / IAM M-273 / BP-1).